A 287-amino-acid chain; its full sequence is Nucleotide-binding protein HD_0584 (287 aa).

8-15 (GRSGSGKS) lines the ATP pocket. GTP is bound at residue 56 to 59 (DIRN).

Belongs to the RapZ-like family.

Functionally, displays ATPase and GTPase activities. The polypeptide is Nucleotide-binding protein HD_0584 (Haemophilus ducreyi (strain 35000HP / ATCC 700724)).